The following is a 146-amino-acid chain: 3-hydroxyacyl-[acyl-carrier-protein] dehydratase FabZ (146 aa).

The active site involves His46.

It belongs to the thioester dehydratase family. FabZ subfamily.

The protein resides in the cytoplasm. It catalyses the reaction a (3R)-hydroxyacyl-[ACP] = a (2E)-enoyl-[ACP] + H2O. Its function is as follows. Involved in unsaturated fatty acids biosynthesis. Catalyzes the dehydration of short chain beta-hydroxyacyl-ACPs and long chain saturated and unsaturated beta-hydroxyacyl-ACPs. This Acinetobacter baumannii (strain ATCC 17978 / DSM 105126 / CIP 53.77 / LMG 1025 / NCDC KC755 / 5377) protein is 3-hydroxyacyl-[acyl-carrier-protein] dehydratase FabZ.